A 275-amino-acid chain; its full sequence is Phosphonoacetaldehyde hydrolase (275 aa).

The active-site Nucleophile is Asp-15. The Mg(2+) site is built by Asp-15 and Ala-17. Lys-56 serves as the catalytic Schiff-base intermediate with substrate. Asp-189 provides a ligand contact to Mg(2+).

It belongs to the HAD-like hydrolase superfamily. PhnX family. Homodimer. It depends on Mg(2+) as a cofactor.

The enzyme catalyses phosphonoacetaldehyde + H2O = acetaldehyde + phosphate + H(+). Involved in phosphonate degradation. This chain is Phosphonoacetaldehyde hydrolase, found in Pseudomonas fluorescens (strain SBW25).